The primary structure comprises 124 residues: Mini zinc finger protein 4 (124 aa).

A ZF-HD dimerization-type; degenerate zinc finger spans residues 35 to 84; it reads YGECRRNHAARMGGHAVDGCREFLAEGEEGTGGALRCAACGCHRSFHRRV.

Homo- and heterodimers.

It is found in the cytoplasm. Inhibits zinc finger homeodomain (ZHD) transcription factors, by interacting with them to prevent both their nuclear localization and their DNA-binding properties. This is Mini zinc finger protein 4 (MIF4) from Oryza sativa subsp. japonica (Rice).